The following is a 149-amino-acid chain: UPF0178 protein lwe1471 (149 aa).

This sequence belongs to the UPF0178 family.

In Listeria welshimeri serovar 6b (strain ATCC 35897 / DSM 20650 / CCUG 15529 / CIP 8149 / NCTC 11857 / SLCC 5334 / V8), this protein is UPF0178 protein lwe1471.